The chain runs to 95 residues: Aspartyl/glutamyl-tRNA(Asn/Gln) amidotransferase subunit C (95 aa).

This sequence belongs to the GatC family. Heterotrimer of A, B and C subunits.

It carries out the reaction L-glutamyl-tRNA(Gln) + L-glutamine + ATP + H2O = L-glutaminyl-tRNA(Gln) + L-glutamate + ADP + phosphate + H(+). It catalyses the reaction L-aspartyl-tRNA(Asn) + L-glutamine + ATP + H2O = L-asparaginyl-tRNA(Asn) + L-glutamate + ADP + phosphate + 2 H(+). In terms of biological role, allows the formation of correctly charged Asn-tRNA(Asn) or Gln-tRNA(Gln) through the transamidation of misacylated Asp-tRNA(Asn) or Glu-tRNA(Gln) in organisms which lack either or both of asparaginyl-tRNA or glutaminyl-tRNA synthetases. The reaction takes place in the presence of glutamine and ATP through an activated phospho-Asp-tRNA(Asn) or phospho-Glu-tRNA(Gln). This chain is Aspartyl/glutamyl-tRNA(Asn/Gln) amidotransferase subunit C, found in Clostridium botulinum (strain Loch Maree / Type A3).